A 439-amino-acid chain; its full sequence is MATKEYFPGIGKIKFEGKDSKNPMAFRYYDAEKMINGRSMKDWLKFAMAWWHTLCAEGGDQFGGGTKQFPWNGDPDPVQAAKNKMDAGFEFMQKMGIGYYCFHDVDLVTEADSIEAYEANLKELVAYAKQKQAETGIKLLWGTANVFSHARYMNGAATNPDFDVVARAAVQIKNAIDATIELGGTNYVFWGGREGYMSLLNTDQKREKEHLAQMLTIARDYGRARGFKGTFLIEPKPMEPTKHQYDVDTETVIGFLKAHGLNQDFKVNIEVNHATLAGHTFEHELAVAVDNGMLGSIDANRGDYQNGWDTDQFPIDNFELTQAMMQIIRNDGLGNGGTNFDAKTRRNSTDPEDIFIAHIAGMDAMARALESAANLLNESPYQKMLSDRYASFDAGKGKEFEEGKLSLEELVAYAKANGEPKQTSGQQELYEALVNIYSL.

Catalysis depends on residues H103 and D106. Residues E234, E270, H273, D298, D309, D311, and D341 each coordinate Mg(2+).

This sequence belongs to the xylose isomerase family. Homotetramer. Mg(2+) serves as cofactor.

The protein resides in the cytoplasm. It carries out the reaction alpha-D-xylose = alpha-D-xylulofuranose. In Bacteroides fragilis (strain ATCC 25285 / DSM 2151 / CCUG 4856 / JCM 11019 / LMG 10263 / NCTC 9343 / Onslow / VPI 2553 / EN-2), this protein is Xylose isomerase.